A 411-amino-acid polypeptide reads, in one-letter code: Tyrosine--tRNA ligase (411 aa).

Positions 50–59 (PTRPDLHLGH) match the 'HIGH' region motif. A 'KMSKS' region motif is present at residues 236–240 (KMSKS). Lys239 lines the ATP pocket. The S4 RNA-binding domain occupies 345–409 (VSMAKLVVLA…GKDKFARLVL (65 aa)).

It belongs to the class-I aminoacyl-tRNA synthetase family. TyrS type 2 subfamily. Homodimer.

The protein localises to the cytoplasm. The catalysed reaction is tRNA(Tyr) + L-tyrosine + ATP = L-tyrosyl-tRNA(Tyr) + AMP + diphosphate + H(+). Its function is as follows. Catalyzes the attachment of tyrosine to tRNA(Tyr) in a two-step reaction: tyrosine is first activated by ATP to form Tyr-AMP and then transferred to the acceptor end of tRNA(Tyr). This chain is Tyrosine--tRNA ligase, found in Deinococcus radiodurans (strain ATCC 13939 / DSM 20539 / JCM 16871 / CCUG 27074 / LMG 4051 / NBRC 15346 / NCIMB 9279 / VKM B-1422 / R1).